We begin with the raw amino-acid sequence, 515 residues long: Bifunctional purine biosynthesis protein PurH (515 aa).

An MGS-like domain is found at 1-145; it reads MTKRVLISVS…KNHASVTVVV (145 aa).

Belongs to the PurH family.

It carries out the reaction (6R)-10-formyltetrahydrofolate + 5-amino-1-(5-phospho-beta-D-ribosyl)imidazole-4-carboxamide = 5-formamido-1-(5-phospho-D-ribosyl)imidazole-4-carboxamide + (6S)-5,6,7,8-tetrahydrofolate. The enzyme catalyses IMP + H2O = 5-formamido-1-(5-phospho-D-ribosyl)imidazole-4-carboxamide. Its pathway is purine metabolism; IMP biosynthesis via de novo pathway; 5-formamido-1-(5-phospho-D-ribosyl)imidazole-4-carboxamide from 5-amino-1-(5-phospho-D-ribosyl)imidazole-4-carboxamide (10-formyl THF route): step 1/1. It participates in purine metabolism; IMP biosynthesis via de novo pathway; IMP from 5-formamido-1-(5-phospho-D-ribosyl)imidazole-4-carboxamide: step 1/1. The protein is Bifunctional purine biosynthesis protein PurH of Streptococcus pneumoniae (strain Taiwan19F-14).